A 1161-amino-acid chain; its full sequence is Nuclear receptor-interacting protein 1 (1161 aa).

The segment at Met1 to Asp416 is interaction with ZNF366. The LXXLL motif 1 signature appears at Leu21–Leu25. The disordered stretch occupies residues Gly34–Val68. A compositionally biased stretch (polar residues) spans Asn50 to Val68. The repression domain 1 stretch occupies residues Met78–Ala335. Ser104 carries the post-translational modification Phosphoserine. An N6-acetyllysine; alternate modification is found at Lys111. A Glycyl lysine isopeptide (Lys-Gly) (interchain with G-Cter in SUMO2); alternate cross-link involves residue Lys111. The LXXLL motif 2 signature appears at Leu133–Leu137. Lys158 is subject to N6-acetyllysine. Lys170 is covalently cross-linked (Glycyl lysine isopeptide (Lys-Gly) (interchain with G-Cter in SUMO2)). Residues Leu185 to Leu189 carry the LXXLL motif 3 motif. Glycyl lysine isopeptide (Lys-Gly) (interchain with G-Cter in SUMO2) cross-links involve residues Lys195 and Lys198. Position 207 is a phosphothreonine (Thr207). Ser218 is modified (phosphoserine). Positions Leu267–Leu271 match the LXXLL motif 4 motif. N6-acetyllysine occurs at positions 287 and 311. Ser358 bears the Phosphoserine mark. Lys374 participates in a covalent cross-link: Glycyl lysine isopeptide (Lys-Gly) (interchain with G-Cter in SUMO2). Residue Ser380 is modified to Phosphoserine. The LXXLL motif 5 signature appears at Leu382–Leu386. Residues Thr393–Tyr436 are disordered. The interval Thr411–Gly701 is repression domain 2. The tract at residues Asp432 to Asp473 is required for targeting to small nuclear foci. Residues Pro441–Lys447 carry the CTBP-binding; principal site motif. 2 positions are modified to N6-acetyllysine: Lys447 and Lys482. Ser488 is modified (phosphoserine). The short motif at Leu501–Leu505 is the LXXLL motif 6 element. A Glycyl lysine isopeptide (Lys-Gly) (interchain with G-Cter in SUMO2) cross-link involves residue Lys509. Residues Asn517–Val552 are compositionally biased toward polar residues. Positions Asn517–Thr559 are disordered. Ser519 carries the phosphoserine modification. Lys529 is subject to N6-acetyllysine. Phosphoserine occurs at positions 531, 543, and 565. Positions Pro566–Ser570 match the CTBP-binding motif. Disordered regions lie at residues Thr604–Ser623, Gly639–Cys702, and Leu717–Ala747. Lys607 is subject to N6-acetyllysine. Ser672 is subject to Phosphoserine. The LXXLL motif 7 motif lies at Leu714 to Leu718. Basic and acidic residues predominate over residues Gly724–Ala747. Residues Asp736–Ser886 are repression domain 3. Residues Val754 to Glu1161 form an interaction with ZNF366 region. Residues Lys757 and Lys803 each participate in a glycyl lysine isopeptide (Lys-Gly) (interchain with G-Cter in SUMO2) cross-link. Position 808 is a phosphoserine (Ser808). The LXXLL motif 8 signature appears at Leu820 to Leu824. The interval Glu829–Leu848 is disordered. Residues Lys851 and Lys902 each participate in a glycyl lysine isopeptide (Lys-Gly) (interchain with G-Cter in SUMO2) cross-link. An N6-acetyllysine; alternate modification is found at Lys932. A Glycyl lysine isopeptide (Lys-Gly) (interchain with G-Cter in SUMO2); alternate cross-link involves residue Lys932. An LXXLL motif 9 motif is present at residues Leu937–Leu941. The CTBP-binding motif lies at Val947–Ser951. A compositionally biased stretch (basic and acidic residues) spans Leu950–Lys962. The disordered stretch occupies residues Leu950–Glu976. Ser1003 is modified (phosphoserine). The interval Leu1063–Lys1076 is ligand-dependent nuclear receptor binding. Glycyl lysine isopeptide (Lys-Gly) (interchain with G-Cter in SUMO2) cross-links involve residues Lys1108, Lys1118, and Lys1157. Residues Phe1121–Glu1161 are repression domain 4.

In terms of assembly, interacts with CTBP1, CTBP2, ERS1, HDAC1, HDAC2, HDAC5, HDAC6, NR2C2, NR3C1, NR3C2, YWHAH, JUN and FOS. Found in a complex with both NR3C1 and YWHAH. Interacts with NR2C1 (sumoylated form and via the ligand-binding domain); the interaction results in promoting the repressor activity of NR2C1. Interacts with RARA and RXRB homodimers and RARA/RXRB heterodimers in the presence of ligand. Interacts with HDAC1 and HDAC3 via its N-terminal domain. Interacts with ZNF366. Interacts with RORA. Acetylation abolishes interaction with CTBP1. Phosphorylation enhances interaction with YWHAH. Acetylation regulates its nuclear translocation and corepressive activity. Expressed in the embryonic placenta. In the adult, expression is strong in the testis and brain. Also expressed at a high level in the white adipose tissue. Expressed constantly but at a weaker level in the adult heart, lung, stomach and kidney. Expressed moderately in the skeletal muscle. Expressed at a low level in the adult spleen, liver and brown adipose tissue. Expressed in the ovary at a high level in granulosa cells and at a lower level in the thecal and interstitial compartments.

The protein localises to the nucleus. Its function is as follows. Modulates transcriptional repression by nuclear hormone receptors such as NR2C1, thyroid hormone receptor and retinoic acid receptor/RARA. Essential for cumulus expansion and follicle rupture during ovulation. Also controls the balance between fat accumulation and energy expenditure. Positive regulator of the circadian clock gene expression: stimulates transcription of BMAL1, CLOCK and CRY1 by acting as a coactivator for RORA and RORC. Involved in the regulation of ovarian function. Plays a role in renal development. The polypeptide is Nuclear receptor-interacting protein 1 (Mus musculus (Mouse)).